A 323-amino-acid chain; its full sequence is tRNA dimethylallyltransferase (323 aa).

Residue 18 to 25 coordinates ATP; it reads GPTASGKT. 20-25 contacts substrate; that stretch reads TASGKT. The segment at 44–47 is interaction with substrate tRNA; it reads DSAL.

It belongs to the IPP transferase family. Monomer. The cofactor is Mg(2+).

The enzyme catalyses adenosine(37) in tRNA + dimethylallyl diphosphate = N(6)-dimethylallyladenosine(37) in tRNA + diphosphate. In terms of biological role, catalyzes the transfer of a dimethylallyl group onto the adenine at position 37 in tRNAs that read codons beginning with uridine, leading to the formation of N6-(dimethylallyl)adenosine (i(6)A). This chain is tRNA dimethylallyltransferase, found in Blochmanniella floridana.